Reading from the N-terminus, the 421-residue chain is Tyrosine-protein phosphatase non-receptor type 20 (421 aa).

The tract at residues 1–58 (MSSPGNVRQKHGRDNDEHEGDSDDLNLQKSLPSSSQQKTPTKPVFGNKVNSESVKTSH) is disordered. Positions 27–41 (LQKSLPSSSQQKTPT) are enriched in low complexity. The segment covering 48–58 (KVNSESVKTSH) has biased composition (polar residues). S76 carries the post-translational modification Phosphoserine. A disordered region spans residues 93 to 116 (RWSSVDPESAGPSKTVSTVLSESS). Residues 104-116 (PSKTVSTVLSESS) show a composition bias toward polar residues. At S122 the chain carries Phosphoserine. One can recognise a Tyrosine-protein phosphatase domain in the interval 160 to 413 (IIREFLELEE…QFCYEIVLEV (254 aa)). Substrate-binding positions include D324, 354–360 (CSAGVGR), and Q398. C354 functions as the Phosphocysteine intermediate in the catalytic mechanism.

It belongs to the protein-tyrosine phosphatase family. Non-receptor class subfamily.

The protein resides in the nucleus. It is found in the cytoplasm. Its subcellular location is the cytoskeleton. The protein localises to the microtubule organizing center. It localises to the centrosome. It carries out the reaction O-phospho-L-tyrosyl-[protein] + H2O = L-tyrosyl-[protein] + phosphate. In terms of biological role, tyrosine-protein phosphatase targeted to sites of actin polymerization in response of varied extracellular stimuli. Has tyrosine phosphatase activity towards various tyrosyl phosphorylated substrates. This is Tyrosine-protein phosphatase non-receptor type 20 (Ptpn20) from Rattus norvegicus (Rat).